Here is a 153-residue protein sequence, read N- to C-terminus: MIREIRKVGDPILKTKAKKVEKIDEKVKELARDMIETMKFCNGVGLAAPQVGESLRIIVVDYEDNPIVLINPEIIEMSGEELDYEGCLSVPGVEVPVKRAERIVFKAQDLDGRTKKYRAKGLLARVVQHEVDHLDGMLILDRAVEETLKTEEK.

Fe cation is bound by residues Cys-87 and His-129. The active site involves Glu-130. Residue His-133 participates in Fe cation binding.

The protein belongs to the polypeptide deformylase family. The cofactor is Fe(2+).

It catalyses the reaction N-terminal N-formyl-L-methionyl-[peptide] + H2O = N-terminal L-methionyl-[peptide] + formate. Removes the formyl group from the N-terminal Met of newly synthesized proteins. Requires at least a dipeptide for an efficient rate of reaction. N-terminal L-methionine is a prerequisite for activity but the enzyme has broad specificity at other positions. The polypeptide is Peptide deformylase (Dictyoglomus thermophilum (strain ATCC 35947 / DSM 3960 / H-6-12)).